A 361-amino-acid chain; its full sequence is Putative F-box protein At3g19560 (361 aa).

One can recognise an F-box domain in the interval 3–49; the sequence is MTMMSDISQDLLEEILSRVPITSLRAVKSTCKRWKDLLNDPSFSKKY.

The chain is Putative F-box protein At3g19560 from Arabidopsis thaliana (Mouse-ear cress).